We begin with the raw amino-acid sequence, 86 residues long: MTLQDLIDKLLGRQPASADTARQRLQLVLAHDRSDLNPELLDQMRREILEVVSRYVEIDLSEGDVSLETEDRVTALVANLPIRRTL.

It belongs to the MinE family.

Functionally, prevents the cell division inhibition by proteins MinC and MinD at internal division sites while permitting inhibition at polar sites. This ensures cell division at the proper site by restricting the formation of a division septum at the midpoint of the long axis of the cell. This Parasynechococcus marenigrum (strain WH8102) protein is Cell division topological specificity factor.